A 432-amino-acid chain; its full sequence is Adenylosuccinate synthetase (432 aa).

GTP is bound by residues 13-19 and 41-43; these read GDEGKGK and GHT. D14 serves as the catalytic Proton acceptor. D14 and G41 together coordinate Mg(2+). Residues 14 to 17, 39 to 42, T130, R144, Q225, T240, and R304 contribute to the IMP site; these read DEGK and NAGH. The active-site Proton donor is the H42. Residue 300–306 coordinates substrate; the sequence is AVTGRPR. GTP-binding positions include R306, 332-334, and 415-417; these read KLD and STG.

This sequence belongs to the adenylosuccinate synthetase family. As to quaternary structure, homodimer. Mg(2+) is required as a cofactor.

The protein resides in the cytoplasm. It carries out the reaction IMP + L-aspartate + GTP = N(6)-(1,2-dicarboxyethyl)-AMP + GDP + phosphate + 2 H(+). The protein operates within purine metabolism; AMP biosynthesis via de novo pathway; AMP from IMP: step 1/2. Its function is as follows. Plays an important role in the de novo pathway of purine nucleotide biosynthesis. Catalyzes the first committed step in the biosynthesis of AMP from IMP. This is Adenylosuccinate synthetase from Haemophilus influenzae (strain ATCC 51907 / DSM 11121 / KW20 / Rd).